The following is a 222-amino-acid chain: Ribosomal RNA small subunit methyltransferase G (222 aa).

Residues Gly84, Phe89, 141–142, and Arg154 contribute to the S-adenosyl-L-methionine site; that span reads VE.

The protein belongs to the methyltransferase superfamily. RNA methyltransferase RsmG family.

The protein resides in the cytoplasm. It carries out the reaction guanosine(527) in 16S rRNA + S-adenosyl-L-methionine = N(7)-methylguanosine(527) in 16S rRNA + S-adenosyl-L-homocysteine. In terms of biological role, specifically methylates the N7 position of guanine in position 527 of 16S rRNA. In Bradyrhizobium sp. (strain BTAi1 / ATCC BAA-1182), this protein is Ribosomal RNA small subunit methyltransferase G.